Consider the following 292-residue polypeptide: ATP synthase gamma chain (292 aa).

It belongs to the ATPase gamma chain family. In terms of assembly, F-type ATPases have 2 components, CF(1) - the catalytic core - and CF(0) - the membrane proton channel. CF(1) has five subunits: alpha(3), beta(3), gamma(1), delta(1), epsilon(1). CF(0) has three main subunits: a, b and c.

Its subcellular location is the cell membrane. In terms of biological role, produces ATP from ADP in the presence of a proton gradient across the membrane. The gamma chain is believed to be important in regulating ATPase activity and the flow of protons through the CF(0) complex. The sequence is that of ATP synthase gamma chain from Streptococcus suis (strain 05ZYH33).